A 63-amino-acid polypeptide reads, in one-letter code: Cecropin (63 aa).

An N-terminal signal peptide occupies residues 1 to 23 (MNFYKIFVFIALILALSVSQSEA). At Arg-62 the chain carries Arginine amide.

As to quaternary structure, monomer. In terms of tissue distribution, hemolymph.

The protein localises to the secreted. Its function is as follows. Cecropins have lytic and antibacterial activity against several Gram-negative bacteria. In Glossina morsitans morsitans (Savannah tsetse fly), this protein is Cecropin.